The following is a 372-amino-acid chain: N-methyl-L-tryptophan oxidase (372 aa).

Residue 4 to 34 (DLIIIGSGSVGAAAGYYATRAGLKVLMTDAH) coordinates FAD. An S-8alpha-FAD cysteine modification is found at cysteine 307.

The protein belongs to the MSOX/MTOX family. MTOX subfamily. In terms of assembly, monomer. FAD serves as cofactor.

It catalyses the reaction N(alpha)-methyl-L-tryptophan + O2 + H2O = L-tryptophan + formaldehyde + H2O2. In terms of biological role, catalyzes the oxidative demethylation of N-methyl-L-tryptophan. This Citrobacter koseri (strain ATCC BAA-895 / CDC 4225-83 / SGSC4696) protein is N-methyl-L-tryptophan oxidase.